We begin with the raw amino-acid sequence, 486 residues long: Probable peptidoglycan glycosyltransferase FtsW (486 aa).

Residues 1–50 lie on the Cytoplasmic side of the membrane; it reads MAGAARDRAFLDHFGGAGADRPCHVEGALMNDMSRQATRLDAIGGRYDPW. The chain crosses the membrane as a helical span at residues 51-71; sequence LLGAAVTLASLGVVMVASSSI. Residues 72-77 are Periplasmic-facing; it reads ELEASP. Residues 78-98 form a helical membrane-spanning segment; it reads FYYLTRHLLFLGGGIALAFWA. The Cytoplasmic portion of the chain corresponds to 99–112; the sequence is MRTELKTIEQHNQM. Residues 113 to 133 traverse the membrane as a helical segment; sequence LLLACFVLLVVVFVPGLGSTV. Residues 134–141 lie on the Periplasmic side of the membrane; that stretch reads NGAKRWIN. The chain crosses the membrane as a helical span at residues 142–162; sequence LGVSRFQVVESVKVFYIIWLA. Over 163–174 the chain is Cytoplasmic; that stretch reads SYLVRFRDEVNA. The helical transmembrane segment at 175 to 195 threads the bilayer; sequence TWQAMLKPVFVVGLLVGLLLL. Over 196–199 the chain is Periplasmic; sequence QPDF. Residues 200–220 form a helical membrane-spanning segment; the sequence is GSSMLLLSVTACMLVLGGAPI. The Cytoplasmic portion of the chain corresponds to 221–222; sequence GR. Residues 223-243 form a helical membrane-spanning segment; sequence IILPILLLLPALVALVIFEPY. The Periplasmic portion of the chain corresponds to 244-298; that stretch reads RMRRVTSFMDPWVDQLGSGYQLSNALMAIGRGQWTGVGLGASVQKLNYLPESHTD. Residues 299–319 traverse the membrane as a helical segment; that stretch reads FIFSVIAEELGFVGVCGVIGL. Topologically, residues 320-342 are cytoplasmic; sequence YALLVGRAFWLGMRCVEMKRHFS. The helical transmembrane segment at 343–363 threads the bilayer; it reads GYIAFGIGLWIAMQSFVSIGV. The Periplasmic segment spans residues 364-374; sequence NLGILPTKGLT. Residues 375-395 traverse the membrane as a helical segment; the sequence is LPLISSGGSSVLMTCLAMGVL. The Cytoplasmic portion of the chain corresponds to 396–486; it reads LRVSYEADRA…RVEPTFGRIA (91 aa).

It belongs to the SEDS family. FtsW subfamily.

The protein resides in the cell inner membrane. The catalysed reaction is [GlcNAc-(1-&gt;4)-Mur2Ac(oyl-L-Ala-gamma-D-Glu-L-Lys-D-Ala-D-Ala)](n)-di-trans,octa-cis-undecaprenyl diphosphate + beta-D-GlcNAc-(1-&gt;4)-Mur2Ac(oyl-L-Ala-gamma-D-Glu-L-Lys-D-Ala-D-Ala)-di-trans,octa-cis-undecaprenyl diphosphate = [GlcNAc-(1-&gt;4)-Mur2Ac(oyl-L-Ala-gamma-D-Glu-L-Lys-D-Ala-D-Ala)](n+1)-di-trans,octa-cis-undecaprenyl diphosphate + di-trans,octa-cis-undecaprenyl diphosphate + H(+). It participates in cell wall biogenesis; peptidoglycan biosynthesis. Peptidoglycan polymerase that is essential for cell division. The chain is Probable peptidoglycan glycosyltransferase FtsW from Xanthomonas oryzae pv. oryzae (strain KACC10331 / KXO85).